The sequence spans 972 residues: 116 kDa U5 small nuclear ribonucleoprotein component (972 aa).

Met-1 carries the N-acetylmethionine modification. The disordered stretch occupies residues 1-54 (MDTDLYDEFGNYIGPELDSDEDDDELGRETKDLDEMDDDDDDDDIGDHDDDHPG). Acidic residues-rich tracts occupy residues 17–26 (LDSDEDDDEL) and 34–48 (DEMD…IGDH). Residue Ser-19 is modified to Phosphoserine. Residue Lys-64 forms a Glycyl lysine isopeptide (Lys-Gly) (interchain with G-Cter in SUMO1); alternate linkage. Lys-64 is covalently cross-linked (Glycyl lysine isopeptide (Lys-Gly) (interchain with G-Cter in SUMO2); alternate). Thr-86 is subject to Phosphothreonine. One can recognise a tr-type G domain in the interval 127 to 409 (ELIRNVTLCG…GIHLTKEELK (283 aa)). Residues 136-143 (GHLHHGKT), 204-208 (DTPGH), and 258-261 (NKID) contribute to the GTP site.

Belongs to the TRAFAC class translation factor GTPase superfamily. Classic translation factor GTPase family. EF-G/EF-2 subfamily. Component of the U5 snRNP and the U4/U6-U5 tri-snRNP complex, a building block of the spliceosome. The U4/U6-U5 tri-snRNP complex is composed of the U4, U6 and U5 snRNAs and at least PRPF3, PRPF4, PRPF6, PRPF8, PRPF31, SNRNP200, TXNL4A, SNRNP40, DDX23, CD2BP2, PPIH, SNU13, EFTUD2, SART1 and USP39. Component of the pre-catalytic, catalytic and post-catalytic spliceosome complexes. Component of the minor spliceosome, which splices U12-type introns. Within this complex, interacts with CRIPT. Interacts with ERBB4 and PRPF8. Interacts with PIH1D1. Interacts with RPAP3 and URI1 in a ZNHIT2-dependent manner. Interacts with NRDE2. Interacts with FAM50A. Interacts with UBL5.

It is found in the nucleus. Functionally, required for pre-mRNA splicing as component of the spliceosome, including pre-catalytic, catalytic and post-catalytic spliceosomal complexes. Component of the U5 snRNP and the U4/U6-U5 tri-snRNP complex, a building block of the spliceosome. As a component of the minor spliceosome, involved in the splicing of U12-type introns in pre-mRNAs. This chain is 116 kDa U5 small nuclear ribonucleoprotein component (EFTUD2), found in Pongo abelii (Sumatran orangutan).